The sequence spans 249 residues: Ribonuclease HII (249 aa).

Residues 1–19 (MAPRPKAPPQPAEPDPALP) are compositionally biased toward pro residues. Positions 1 to 31 (MAPRPKAPPQPAEPDPALPRPRGRPPKAGAV) are disordered. The region spanning 52-240 (APVAGADEVG…VREQQLGLFP (189 aa)) is the RNase H type-2 domain. A divalent metal cation contacts are provided by aspartate 58, glutamate 59, and aspartate 149.

The protein belongs to the RNase HII family. The cofactor is Mn(2+). Mg(2+) is required as a cofactor.

The protein localises to the cytoplasm. The enzyme catalyses Endonucleolytic cleavage to 5'-phosphomonoester.. In terms of biological role, endonuclease that specifically degrades the RNA of RNA-DNA hybrids. This chain is Ribonuclease HII, found in Xanthobacter autotrophicus (strain ATCC BAA-1158 / Py2).